Here is a 335-residue protein sequence, read N- to C-terminus: Adenosine deaminase (335 aa).

The Zn(2+) site is built by His-12 and His-14. Substrate-binding residues include His-14 and Asp-16. His-197 is a Zn(2+) binding site. Residue Glu-200 is the Proton donor of the active site. Position 278 (Asp-278) interacts with Zn(2+).

It belongs to the metallo-dependent hydrolases superfamily. Adenosine and AMP deaminases family. Adenosine deaminase subfamily. Requires Zn(2+) as cofactor.

The enzyme catalyses adenosine + H2O + H(+) = inosine + NH4(+). The catalysed reaction is 2'-deoxyadenosine + H2O + H(+) = 2'-deoxyinosine + NH4(+). Its function is as follows. Catalyzes the hydrolytic deamination of adenosine and 2-deoxyadenosine. This Clostridium botulinum (strain ATCC 19397 / Type A) protein is Adenosine deaminase.